Here is a 296-residue protein sequence, read N- to C-terminus: Small ribosomal subunit protein uS2 (296 aa).

Low complexity predominate over residues 274 to 284 (ASSAAPADTWA). Residues 274–296 (ASSAAPADTWAGESGNPDAGVKW) form a disordered region.

It belongs to the universal ribosomal protein uS2 family. As to quaternary structure, component of the small ribosomal subunit. Mature ribosomes consist of a small (40S) and a large (60S) subunit. The 40S subunit contains about 33 different proteins and 1 molecule of RNA (18S). The 60S subunit contains about 49 different proteins and 3 molecules of RNA (25S, 5.8S and 5S). Interacts with RPS21.

Its subcellular location is the cytoplasm. Required for the assembly and/or stability of the 40S ribosomal subunit. Required for the processing of the 20S rRNA-precursor to mature 18S rRNA in a late step of the maturation of 40S ribosomal subunits. The protein is Small ribosomal subunit protein uS2 of Ajellomyces capsulatus (strain G186AR / H82 / ATCC MYA-2454 / RMSCC 2432) (Darling's disease fungus).